The primary structure comprises 2074 residues: Cell adhesion molecule Dscam2 (2074 aa).

A signal peptide spans 1-21 (MWISSRFFVILLLLNLDNTCS). The Extracellular segment spans residues 22-1619 (EPFEAHLRGP…QTTVIFANIN (1598 aa)). Ig-like C2-type domains lie at 31–120 (PGFV…RIVS), 238–326 (PSVV…LRLT), 330–417 (PIQV…AELQ), 422–516 (PPVL…ARLN), 521–607 (PYIR…GEVT), 612–698 (PSIE…IKYT), 707–802 (PRWI…LKVN), and 805–902 (PYFS…LQVQ). Intrachain disulfides connect cysteine 53–cysteine 109, cysteine 259–cysteine 310, cysteine 352–cysteine 400, cysteine 444–cysteine 500, cysteine 541–cysteine 590, cysteine 633–cysteine 686, cysteine 728–cysteine 783, and cysteine 826–cysteine 884. 4 consecutive Fibronectin type-III domains span residues 907–1003 (PPSV…TEPQ), 1008–1108 (PPLS…TMED), 1113–1211 (PPED…SEED), and 1215–1311 (APAD…TNRI). Residues 1312 to 1400 (PARIISFGGP…DRLTHTLIVQ (89 aa)) form the Ig-like C2-type 9 domain. A disulfide bridge links cysteine 1334 with cysteine 1382. Fibronectin type-III domains are found at residues 1402 to 1495 (PPTA…TQGQ) and 1496 to 1595 (SPGH…TKDG). Residues 1620–1640 (LLIPTIAAVSGMFCTIIMIIV) form a helical membrane-spanning segment. The Cytoplasmic portion of the chain corresponds to 1641–2074 (CYRHMLKNAP…KFFTAPTLPK (434 aa)). Disordered stretches follow at residues 1739-1766 (EGCSSPPPAAVLNPPTTTTHHHHHHQRP), 1778-1917 (PFHN…KSIS), 1936-1974 (SPSISTQQQKQFHKQQLQNSSTNNSQHSSSNPNSSSLKQ), and 2011-2074 (PSSQ…TLPK). The span at 1757–1766 (THHHHHHQRP) shows a compositional bias: basic residues. Positions 1831–1846 (AQSSTSSDLSPMSEQK) are enriched in polar residues. Over residues 1848–1858 (LPRRGRSRYHH) the composition is skewed to basic residues. Over residues 1859-1868 (QQYQFSTNTT) the composition is skewed to polar residues. 3 stretches are compositionally biased toward low complexity: residues 1875-1903 (NKMNNNTTSNTNTTATNTTATPSTSSNSN), 1942-1974 (QQQKQFHKQQLQNSSTNNSQHSSSNPNSSSLKQ), and 2036-2051 (SQQSHPHQQQQQQQHP). A compositionally biased stretch (polar residues) spans 2055 to 2066 (LNPSTAMLSSKF).

Its subcellular location is the membrane. In terms of biological role, cell adhesion molecule. This is Cell adhesion molecule Dscam2 (Dscam2) from Drosophila melanogaster (Fruit fly).